Consider the following 176-residue polypeptide: RNA pyrophosphohydrolase (176 aa).

Positions 8-159 (PYRTCVGMML…KRPVYERVVK (152 aa)) constitute a Nudix hydrolase domain. Residues 47–68 (GGVDPGEDTWAAAKRELYEETS) carry the Nudix box motif.

The protein belongs to the Nudix hydrolase family. RppH subfamily. It depends on a divalent metal cation as a cofactor.

Functionally, accelerates the degradation of transcripts by removing pyrophosphate from the 5'-end of triphosphorylated RNA, leading to a more labile monophosphorylated state that can stimulate subsequent ribonuclease cleavage. This Rhodopseudomonas palustris (strain BisA53) protein is RNA pyrophosphohydrolase.